Consider the following 513-residue polypeptide: Probable tubulin polyglutamylase ttll-15 (513 aa).

One can recognise a TTL domain in the interval 73 to 411; sequence VTGSYESAHT…STPITKEADI (339 aa). ATP is bound by residues 216–219, Lys229, and Asp231; that span reads QKFV.

It belongs to the tubulin--tyrosine ligase family. Expressed in hypodermis and pharyngeal muscles.

Its function is as follows. Probable polyglutamylase that forms polyglutamate side chains on tubulin. Probably acts when complexed with other proteins. Appears to be dispensable for polar spindle formation in dividing embryonic cells, for cilia-dependent osmotic avoidance and for male mating behavior. Regulates microtubule dynamics in uterine muscle cells. The protein is Probable tubulin polyglutamylase ttll-15 of Caenorhabditis elegans.